Reading from the N-terminus, the 248-residue chain is Probable transcriptional regulatory protein AZC_0510 (248 aa).

It belongs to the TACO1 family.

It localises to the cytoplasm. The chain is Probable transcriptional regulatory protein AZC_0510 from Azorhizobium caulinodans (strain ATCC 43989 / DSM 5975 / JCM 20966 / LMG 6465 / NBRC 14845 / NCIMB 13405 / ORS 571).